The chain runs to 67 residues: DNA-directed RNA polymerase subunit omega (67 aa).

This sequence belongs to the RNA polymerase subunit omega family. As to quaternary structure, the RNAP catalytic core consists of 2 alpha, 1 beta, 1 beta' and 1 omega subunit. When a sigma factor is associated with the core the holoenzyme is formed, which can initiate transcription.

It carries out the reaction RNA(n) + a ribonucleoside 5'-triphosphate = RNA(n+1) + diphosphate. Its function is as follows. Promotes RNA polymerase assembly. Latches the N- and C-terminal regions of the beta' subunit thereby facilitating its interaction with the beta and alpha subunits. The sequence is that of DNA-directed RNA polymerase subunit omega from Methylibium petroleiphilum (strain ATCC BAA-1232 / LMG 22953 / PM1).